The chain runs to 1337 residues: MFRQGSNSGNKRMTSGARLSQPIIPLSLPTASSKTLEMGRSSKTNPLNAMGLDHNIATSGGDPEYIMQLVNDVRKFSDVLLSLKEAFHSKESQECSQHVVNERLGELVHVLKAVIGKHQALNSSEILGAAGTVIAKVKGVNFKEVNNENKSTIFGEIHTSIDTLAFTFGNVVSDFLMGDVDGGSRLGYPQARRSRSFENLSEDSRGCSQNDLADHSLSPELSTVEQVDLLLLKNDSGVESALLYAKAWSKYTKDVLAWVEKRLSLDMECAKSFAKMAESAKAVASQQDFMPFRDIYVSAFKNEIEYNHVLLQTAAALQTNKFTQPLLARKNDLDKQRKEIKEQWQRELKKMNESESALKKARLLKMQKREEYEKARSSTSRTEEEQPAAGGRTLEKKRRVEEEALQKAEEAQEQYKACVADLEAKKVSLSNAKSEILAQIRKLVFQCDLTLKAVTVNWFQMQQAQTMPLSVNYQALSEQAKKYEPGQRYSEFVRSLPKERVWLESLSQDITASSKTGMSLHKRSQNSTRSSHGNLSQGSATSMDNHSADEVEGNMQPCKAKIAERRSNSSIDMQVPRTQGSQRAWSSGSAGGGGMCSDSESAGGSSESRSMDSPTASPGDFKRRLPRTPSTGTMSSADDLDEREPPSPSDTGLSEMVMETASSPGPFRNAQMSKAAHTHKLRKLRAPSKCRECDSLVVFHGAECEECSLACHKKCLETLAIQCGHKKLQGRLHLFGIDFAQVVKNSPDGIPFIIKKCTSEIESRALTIKGIYRVNGAKSRVEKLCQAFENGKDLVELSDLHPHDISNVLKLYLRQLPEPLILYRYYNDVIGLAKETQNMDKTDSAKEKSAGEQLGLSTELKRVLFKVRDLLRQLPAPHYKTLQFLITHLHRVSEQAEENKMTASNLGIIFGPTLIKPRHLEAEVSLSSLVDYPHQARMVELLIKHHQMIFDVPLSPMSPTSPTVSQASFGSSIQDKESKLSRHSRSLMDIKESAKLYKRHSSVIIPAQLMEEGKEMKTGDHRVQTSGEGSDVNGVGLTSVDSTSVFNRPGASSRMVQLRPQRAKPVSRPISMPIDRLLNERNSRNTVEHDHSPAAIEETTEPEKPTTPRHTNFYRNPFIDTQTLRRTWDRQYRHYDVTPRTAMIVANLPPSGVQKQPEISMASQSSTSRKDGTSQSGVAPISFRAARTLKPSSPGTFYRPPSGGQLKPSDLLAKSVSRAPTTTTGAIYTTAITVLTTASTSSVMTISTAVTTPPTTPTTSVTVALTSKPTFTTVSRSVSGGAGEGLSESDLLSPVTLSPPQSPGSSTEELSPTDAKPLYQRRSRRMQELEHREAHFV.

Residues 1–13 (MFRQGSNSGNKRM) are compositionally biased toward polar residues. Disordered regions lie at residues 1–20 (MFRQGSNSGNKRMTSGARLS), 369–397 (REEYEKARSSTSRTEEEQPAAGGRTLEKK), 513–551 (SSKTGMSLHKRSQNSTRSSHGNLSQGSATSMDNHSADEV), and 564–654 (ERRS…TGLS). An F-BAR domain is found at 225–488 (EQVDLLLLKN…QAKKYEPGQR (264 aa)). A coiled-coil region spans residues 326–443 (LLARKNDLDK…SEILAQIRKL (118 aa)). A compositionally biased stretch (basic and acidic residues) spans 369-384 (REEYEKARSSTSRTEE). 2 stretches are compositionally biased toward polar residues: residues 525-545 (QNSTRSSHGNLSQGSATSMDN) and 568-579 (NSSIDMQVPRTQ). The segment covering 596–613 (CSDSESAGGSSESRSMDS) has biased composition (low complexity). The segment at 676-723 (AHTHKLRKLRAPSKCRECDSLVVFHGAECEECSLACHKKCLETLAIQC) adopts a Phorbol-ester/DAG-type zinc-finger fold. Residues 737 to 950 (IDFAQVVKNS…LLIKHHQMIF (214 aa)) form the Rho-GAP domain. Residues 960 to 973 (TSPTVSQASFGSSI) show a composition bias toward polar residues. Disordered stretches follow at residues 960–983 (TSPTVSQASFGSSIQDKESKLSRH), 1016–1066 (MKTG…AKPV), 1083–1114 (SRNTVEHDHSPAAIEETTEPEKPTTPRHTNFY), 1149–1210 (PPSG…KPSD), and 1273–1337 (TVSR…AHFV). Over residues 974-983 (QDKESKLSRH) the composition is skewed to basic and acidic residues. The span at 1083-1092 (SRNTVEHDHS) shows a compositional bias: basic and acidic residues. 2 stretches are compositionally biased toward polar residues: residues 1161–1177 (MASQSSTSRKDGTSQSG) and 1295–1310 (VTLSPPQSPGSSTEEL). A compositionally biased stretch (basic and acidic residues) spans 1325 to 1337 (RMQELEHREAHFV).

Functionally, GTPase activator for the Rho-type GTPases by converting them to an inactive GDP-bound state. Has strong activity toward RHOA, and weaker activity toward RAC1 and CDC42. The protein is Rho GTPase-activating protein 29 (arhgap29) of Danio rerio (Zebrafish).